We begin with the raw amino-acid sequence, 326 residues long: Macrosialin (326 aa).

Positions 1 to 20 (MRLPVCLILLGPLIAQGTEE) are cleaved as a signal peptide. The segment at 21-109 (DCPHKKAVTL…ATSPRSSTVG (89 aa)) is mucin-like. The Extracellular segment spans residues 21 to 291 (DCPHKKAVTL…PCFSCNRDQS (271 aa)). Positions 38 to 58 (PTATESTASPTTSHRPTTTSH) are enriched in low complexity. The disordered stretch occupies residues 38 to 129 (PTATESTASP…SPRSKGALGN (92 aa)). 4 tandem repeats follow at residues 44-49 (TASPTT), 50-64 (SHRP…VTVH), 65-72 (TSSGPTTV), and 73-88 (THNP…ATIS). Polar residues predominate over residues 59–69 (GNVTVHTSSGP). An N-linked (GlcNAc...) asparagine glycan is attached at Asn-60. Low complexity predominate over residues 70-80 (TTVTHNPATTT). Residues 81–108 (SHGNATISHATVSPTTNGTATSPRSSTV) show a composition bias toward polar residues. Asn-84 and Asn-97 each carry an N-linked (GlcNAc...) asparagine glycan. A compositionally biased stretch (pro residues) spans 111–120 (HPGPPPPSPS). 6 N-linked (GlcNAc...) asparagine glycosylation sites follow: Asn-129, Asn-134, Asn-169, Asn-218, Asn-233, and Asn-251. Cys-139 and Cys-177 are disulfide-bonded. An intrachain disulfide couples Cys-249 to Cys-286. The helical transmembrane segment at 292 to 316 (LLLPLIIGLVLLGLLTLVLIAFCIT) threads the bilayer. Residues 317–326 (RRRQSTYQPL) lie on the Cytoplasmic side of the membrane.

It belongs to the LAMP family. In terms of processing, N- and O-glycosylated. In terms of tissue distribution, expressed in tissue macrophages and to a lesser extent in dendritic cells.

The protein resides in the endosome membrane. The protein localises to the lysosome membrane. It localises to the cell membrane. Its function is as follows. Could play a role in phagocytic activities of tissue macrophages, both in intracellular lysosomal metabolism and extracellular cell-cell and cell-pathogen interactions. Binds to tissue- and organ-specific lectins or selectins, allowing homing of macrophage subsets to particular sites. Rapid recirculation of CD68 from endosomes and lysosomes to the plasma membrane may allow macrophages to crawl over selectin-bearing substrates or other cells. This chain is Macrosialin (Cd68), found in Mus musculus (Mouse).